We begin with the raw amino-acid sequence, 106 residues long: uncharacterized protein (106 aa).

This sequence belongs to the HesB/IscA family.

This is an uncharacterized protein from Cereibacter sphaeroides (Rhodobacter sphaeroides).